A 599-amino-acid polypeptide reads, in one-letter code: Aspartate--tRNA(Asp/Asn) ligase (599 aa).

Glutamate 173 contributes to the L-aspartate binding site. The tract at residues 197-200 (QLFK) is aspartate. Arginine 219 serves as a coordination point for L-aspartate. ATP-binding positions include 219-221 (RDE) and glutamine 228. An L-aspartate-binding site is contributed by histidine 449. Residue glutamate 482 participates in ATP binding. Arginine 489 is a binding site for L-aspartate. 534–537 (GLDR) is a binding site for ATP.

The protein belongs to the class-II aminoacyl-tRNA synthetase family. Type 1 subfamily. In terms of assembly, homodimer.

The protein localises to the cytoplasm. The enzyme catalyses tRNA(Asx) + L-aspartate + ATP = L-aspartyl-tRNA(Asx) + AMP + diphosphate. Aspartyl-tRNA synthetase with relaxed tRNA specificity since it is able to aspartylate not only its cognate tRNA(Asp) but also tRNA(Asn). Reaction proceeds in two steps: L-aspartate is first activated by ATP to form Asp-AMP and then transferred to the acceptor end of tRNA(Asp/Asn). The chain is Aspartate--tRNA(Asp/Asn) ligase from Marinobacter nauticus (strain ATCC 700491 / DSM 11845 / VT8) (Marinobacter aquaeolei).